We begin with the raw amino-acid sequence, 200 residues long: Lipid A acyltransferase PagP (200 aa).

The signal sequence occupies residues 1-24 (MRLKLTSHTCLFALSSLLVTPAFA). Catalysis depends on residues His72, Asp115, and Ser116.

Belongs to the lipid A palmitoyltransferase family. Homodimer.

It is found in the cell outer membrane. It carries out the reaction a lipid A + a 1,2-diacyl-sn-glycero-3-phosphocholine = a hepta-acyl lipid A + a 2-acyl-sn-glycero-3-phosphocholine. The catalysed reaction is a lipid IVA + a 1,2-diacyl-sn-glycero-3-phosphocholine = a lipid IVB + a 2-acyl-sn-glycero-3-phosphocholine. It catalyses the reaction a lipid IIA + a 1,2-diacyl-sn-glycero-3-phosphocholine = a lipid IIB + a 2-acyl-sn-glycero-3-phosphocholine. In terms of biological role, transfers a fatty acid residue from the sn-1 position of a phospholipid to the N-linked hydroxyfatty acid chain on the proximal unit of lipid A or its precursors. In Dickeya dadantii (strain 3937) (Erwinia chrysanthemi (strain 3937)), this protein is Lipid A acyltransferase PagP.